We begin with the raw amino-acid sequence, 146 residues long: Putative nickel-responsive regulator 1 (146 aa).

Positions 81, 92, 94, and 100 each coordinate Ni(2+).

It belongs to the transcriptional regulatory CopG/NikR family. Ni(2+) serves as cofactor.

Transcriptional regulator. This chain is Putative nickel-responsive regulator 1, found in Methanosarcina mazei (strain ATCC BAA-159 / DSM 3647 / Goe1 / Go1 / JCM 11833 / OCM 88) (Methanosarcina frisia).